Reading from the N-terminus, the 537-residue chain is Eukaryotic translation initiation factor 3 subunit L (537 aa).

In terms of domain architecture, PCI spans 300–512 (TFSSILLYIQ…IHIADTKVSH (213 aa)).

This sequence belongs to the eIF-3 subunit L family. Component of the eukaryotic translation initiation factor 3 (eIF-3) complex.

The protein resides in the cytoplasm. Component of the eukaryotic translation initiation factor 3 (eIF-3) complex, which is involved in protein synthesis of a specialized repertoire of mRNAs and, together with other initiation factors, stimulates binding of mRNA and methionyl-tRNAi to the 40S ribosome. The eIF-3 complex specifically targets and initiates translation of a subset of mRNAs involved in cell proliferation. This is Eukaryotic translation initiation factor 3 subunit L from Culex quinquefasciatus (Southern house mosquito).